A 245-amino-acid chain; its full sequence is Dehydrogenase/reductase SDR family member 6 (245 aa).

NAD(+)-binding positions include 16-18 (QGI), aspartate 37, and aspartate 58. Arginine 144 provides a ligand contact to substrate. Residue tyrosine 147 is the Proton acceptor of the active site. NAD(+) contacts are provided by residues lysine 151 and 180–184 (VDTPS). 2 residues coordinate substrate: arginine 188 and arginine 205.

It belongs to the short-chain dehydrogenases/reductases (SDR) family. Homotetramer. In terms of tissue distribution, detected in liver (at protein level).

It is found in the cytoplasm. It carries out the reaction cis-4-hydroxy-L-proline + NAD(+) = 4-oxo-L-proline + NADH + H(+). It catalyses the reaction (R)-3-hydroxybutanoate + NAD(+) = acetoacetate + NADH + H(+). It functions in the pathway amino-acid metabolism. It participates in siderophore biosynthesis. Functionally, NAD(H)-dependent dehydrogenase/reductase with a preference for cyclic substrates. Catalyzes stereoselective conversion of 4-oxo-L-proline to cis-4-hydroxy-L-proline, likely a detoxification mechanism for ketoprolines. Mediates the formation of 2,5-dihydroxybenzoate (2,5-DHBA), a siderophore that chelates free cytoplasmic iron and associates with LCN2, thereby regulating iron transport and homeostasis while protecting cells against free radical-induced oxidative stress. The iron-siderophore complex is imported into mitochondria, providing an iron source for mitochondrial metabolic processes in particular heme synthesis. May act as a 3-hydroxybutyrate dehydrogenase. The sequence is that of Dehydrogenase/reductase SDR family member 6 from Homo sapiens (Human).